An 86-amino-acid polypeptide reads, in one-letter code: U15-lycotoxin-Ls1d (86 aa).

The signal sequence occupies residues 1–20; the sequence is MNSKIFAVLFLLAFLSCVLS. The WAP domain maps to 21 to 66; sequence DQYCPKSSITACKKMNIRNDCCKDDDCTGGSWCCATPCGNFCKYPT. 5 disulfide bridges follow: Cys-24-Cys-54, Cys-32-Cys-58, Cys-41-Cys-53, Cys-42-Cys-80, and Cys-47-Cys-62.

The protein belongs to the venom protein 11 family. 01 (wap-1) subfamily. Contains 5 disulfide bonds. In terms of tissue distribution, expressed by the venom gland.

It localises to the secreted. In terms of biological role, has antibacterial activity. This is U15-lycotoxin-Ls1d from Lycosa singoriensis (Wolf spider).